The sequence spans 1406 residues: DNA-directed RNA polymerase subunit beta' (1406 aa).

The Zn(2+) site is built by Cys72, Cys74, Cys87, and Cys90. Residues Asp462, Asp464, and Asp466 each coordinate Mg(2+). Positions 816, 889, 896, and 899 each coordinate Zn(2+).

This sequence belongs to the RNA polymerase beta' chain family. In terms of assembly, the RNAP catalytic core consists of 2 alpha, 1 beta, 1 beta' and 1 omega subunit. When a sigma factor is associated with the core the holoenzyme is formed, which can initiate transcription. Mg(2+) is required as a cofactor. Zn(2+) serves as cofactor.

It carries out the reaction RNA(n) + a ribonucleoside 5'-triphosphate = RNA(n+1) + diphosphate. Functionally, DNA-dependent RNA polymerase catalyzes the transcription of DNA into RNA using the four ribonucleoside triphosphates as substrates. This is DNA-directed RNA polymerase subunit beta' from Psychrobacter sp. (strain PRwf-1).